Reading from the N-terminus, the 459-residue chain is ATP-dependent RNA helicase me31b (459 aa).

Positions 1–267 (MMTEKLNSGH…EINLMEELTL (267 aa)) are recA-like domain 1. A phosphoserine mark is found at serine 8 and serine 29. Positions 58–86 (NEFEEFCLKRELLMGIFEKGWERPSPIQE) match the Q motif motif. Positions 89–259 (IPIALSGKDV…EKHLREPYEI (171 aa)) constitute a Helicase ATP-binding domain. An ATP-binding site is contributed by 102 to 109 (AKNGTGKT). Positions 207-210 (DEAD) match the DEAD box motif. The gyf binding stretch occupies residues 264–431 (ELTLKGVTQY…PKVIDPALYV (168 aa)). In terms of domain architecture, Helicase C-terminal spans 269–429 (GVTQYYAFVQ…PIPKVIDPAL (161 aa)). The interval 432 to 459 (ANVGASVGDTCNNSDLNNSANEEGNVSK) is recA-like domain 2. Serine 450 is subject to Phosphoserine.

It belongs to the DEAD box helicase family. DDX6/DHH1 subfamily. Conserved component of different types of multiprotein ribonucleoprotein complexes (RNPs) that form distinct germ granules (P-body, nuage, sponge body or polar granules) and P-body-like neuronal RNPs. Consequently it interacts with a wide variety of proteins, some of which appear to be common interactive partners in almost all RNPs types i.e. cup and tral, whereas other interactions are specific to a germ granule/RNP. Core functional components in me31B-containing RNPs include RNA regulatory proteins (such as translational repressor, RNA-decapping and exonuclease proteins), RNA localization proteins and additional proteins depending on the biological context of the RNPs. In the P-body RNPs, interacts with at least the translation repressor proteins tral, cup and Edc3, and the mRNA localization factor yps. Interaction with tral or Edc3 is required for translation repression and possibly RNA decapping; binding to tral and Edc3 is mutually exclusive. In the nuage and germ plasm polar granule RNPs, interacts with at least tral, cup, and additional proteins required for assembly and function of the germ granules such as tud, vas and aub. Interacts (when dimethylated on Arg residues) with tud; interaction is RNA-independent. Component of the osk RNP complex, which is composed of at least me31B, exu, yps, aret/bruno, cup, and the mRNA of osk. Component of the nanos RNP complex, which is composed of at least smg, cup, tral, me31B, the CCR4-NOT complex members Rga/NOT2 and Caf1-55, and the mRNA of nanos (nos). Interacts with tral and piRNA pathway components papi and AGO3; promotes interaction between nuage RNPs and the piRNA-mediated transposon silencing. Forms a RNP containing at least me31B, eIF4E1, cup, tral and pAbp; this interaction is required for the translational silencing of maternal mRNAs during the maternal-to-zygotic transition. In the sponge body, forms a RNP containing at least me31B, exu, yps and the mRNA of osk; interactions with exu and yps are RNA dependent. Component of a neuronal RNP, at least composed of me31B, tral and Fmr1. Component of the Atx2-Not1 repressor complex, composed of at least me31B, Atx2, tyf and pAbp. Interacts (via the C-terminus) with Atx2, tyf, pAbp and Lsm12a. Interacts (via RecA-like domain 2) with 4EHP-GYF2 complex member Gyf (via the me31B binding motif). Interacts with 4E-T, Edc3 and Patr-1. In terms of processing, symmetrically dimethylated on arginine residues. Ubiquitously expressed throughout the brain (at protein level). Expressed in the olfactory system including the antennal lobes, projection neurons, local interneurons, mushroom-body Kenyon cells and glial cells (at protein level).

Its subcellular location is the cytoplasm. It is found in the cytoplasmic ribonucleoprotein granule. The protein resides in the P-body. It localises to the endoplasmic reticulum. The protein localises to the cell projection. Its subcellular location is the dendrite. The enzyme catalyses ATP + H2O = ADP + phosphate + H(+). Its function is as follows. ATP-dependent RNA helicase which is a core component of a variety of ribonucleoprotein complexes (RNPs) that play critical roles in translational repression and mRNA decapping during embryogenesis, oogenesis, neurogenesis and neurotransmission. Recruits core components and translational repressors to some RNP complexes, and mediates RNP aggregation into processing granules such as P-bodies. As part of a RNP complex containing tral, eIF4E1, cup, and pAbp, involved in RNP-mediated translational repression of maternal mRNAs during oogenesis and embryogenesis. As part of a RNP complex containing tral and the RNA localization factors exu and yps, mediates translational silencing of mRNAs such as osk/oskar and bcd/bicoid during their transport to the oocyte in order to prevent their translation until they reach their positional destinations. In neurons and possibly imaginal disks, involved in miRNA-mediated translational repression, possibly in association with components of the piRNA transposon silencing pathway. Involved in RNA localization and protein trafficking in the oocyte. As part of an ER-associated RNP containing tral, cup and yps, required for tral-dependent ER exit site formation and consequently efficient trafficking of proteins such as grk and yl through the secretory pathway. Component of neuron RNPs that mediate transport and translation of neuronal RNAs, including translation repression of synaptic transcripts in preparation for their dendritic targeting. As part of the Atx2-Not1 repressor complex promotes Not1-dependent post-transcriptional gene silencing in adult circadian pacemaker neurons in order to sustain high-amplitude circadian rhythms and Pdf cycling in a per-independent manner. Promotes the interaction between Atx2 and Not1 within the Atx2-Not1 RNP complex. Recruited to the 4EHP-GYF2 complex by Gyf, where it plays a role in 4EHP-GYF2 mediated translational repression and mRNA decay. This chain is ATP-dependent RNA helicase me31b (me31B), found in Drosophila melanogaster (Fruit fly).